An 826-amino-acid chain; its full sequence is MDESALTLGTIDVSYLPNSSEYSIGRCKHASEEWGECGFRPPVFRSATLKWKESLMSRKRPFVGRCCYSCTPQSWDRFFNPSIPSLGLRNVIYINETHTRHRGWLARRLSYVLFIQERDVHKGMFATNVTENVLNSSRVQEAIAEVAAELNPDGSAQQQSKAVNKVKKKAKKILQEMVATVSPAMIRLTGWVLLKLFNSFFWNIQIHKGQLEMVKAATEMNLPLIFLPVHRSHIDYLLLTFILFCHNIKAPYIASGNNLNIPIFSTLIHKLGGFFIRRRLDETPDGQKDILYRALLHGHIVELLRQQQFLEIFLEGTRSRSGKTSCARAGLLSVVVDTLSTNTIPDILIIPVGISYDRIIEGHYNGEQLGKPKKNESLWSVARGVIRMLRKNYGCVRVDFAQPFSLKEYLESQSQKPVSAPLSLEQALLPAILPSRPSDAVDEGTDMSINESRNAADESFRRRLIANLAEHILFTASKSCAIMSTHIVACLLLYRHRQGIDLSTLVEDFFVMKEEVLARDFDLGFSGNSEDVVMHAIQLLGNCITITHTSRNDEFFITPSTTVPSVFELNFYSNGVLHVFIMEAIIACSLYAVLKKRGSGGPASPSLISQEQLVRKAASLCYLLSNEGTISLPCQTFYQICHETVGRFIQYGILTVAEQDDQEDISPSLAEQHWDKKLPEPLSWRSDEEDEDSDFGEEQRDCYLKVSQSKEHQQFITFLQRLLGPLLEAYSSAAIFIHNFSGPVPEPEYLQKLHKYLINRTERRVAVYAESATYCLVKNAVKMFKDIGVFKETKQKKVSVLELSSTFLPQCNRQKLLEYILSFVVL.

Residues 1-87 (MDESALTLGT…FFNPSIPSLG (87 aa)) are Cytoplasmic-facing. An important for mitochondrial localization region spans residues 80-120 (NPSIPSLGLRNVIYINETHTRHRGWLARRLSYVLFIQERDV). The stretch at 88–118 (LRNVIYINETHTRHRGWLARRLSYVLFIQER) is an intramembrane region. Topologically, residues 119–826 (DVHKGMFATN…LEYILSFVVL (708 aa)) are cytoplasmic. The HXXXXD motif motif lies at 230–235 (HRSHID). CoA is bound by residues arginine 278, arginine 279, lysine 288, arginine 293, and arginine 328. Serine 380 bears the Phosphoserine mark. Arginine 462 lines the CoA pocket. Phosphoserine is present on residues serine 686 and serine 693. N6-acetyllysine occurs at positions 778 and 782.

This sequence belongs to the GPAT/DAPAT family.

The protein localises to the mitochondrion outer membrane. The enzyme catalyses sn-glycerol 3-phosphate + an acyl-CoA = a 1-acyl-sn-glycero-3-phosphate + CoA. It carries out the reaction (9Z,12Z)-octadecadienoyl-CoA + sn-glycerol 3-phosphate = 1-(9Z,12Z)-octadecadienoyl-sn-glycero-3-phosphate + CoA. The catalysed reaction is sn-glycerol 3-phosphate + (9Z)-octadecenoyl-CoA = 1-(9Z-octadecenoyl)-sn-glycero-3-phosphate + CoA. It catalyses the reaction sn-glycerol 3-phosphate + octadecanoyl-CoA = 1-octadecanoyl-sn-glycero-3-phosphate + CoA. The enzyme catalyses sn-glycerol 3-phosphate + hexadecanoyl-CoA = 1-hexadecanoyl-sn-glycero-3-phosphate + CoA. It carries out the reaction dodecanoyl-CoA + sn-glycerol 3-phosphate = 1-dodecanoyl-sn-glycerol 3-phosphate + CoA. The catalysed reaction is 1-acyl-sn-glycero-3-phospho-(1'-sn-glycerol) + an acyl-CoA = a 1,2-diacyl-sn-glycero-3-phospho-(1'-sn-glycerol) + CoA. Its pathway is phospholipid metabolism; CDP-diacylglycerol biosynthesis; CDP-diacylglycerol from sn-glycerol 3-phosphate: step 1/3. Functionally, mitochondrial membrane protein that catalyzes the essential first step of biosynthesis of glycerolipids such as triglycerides, phosphatidic acids and lysophosphatidic acids. Esterifies acyl-group from acyl-coenzyme A (acyl-CoA) to the sn-1 position of glycerol-3-phosphate, to produce lysophosphatidic acid. Has a narrow hydrophobic binding cleft that selects for a linear acyl chain. Catalytic activity is higher for substrates with a 16-carbon acyl chain. This Sus scrofa (Pig) protein is Glycerol-3-phosphate acyltransferase 1, mitochondrial.